An 83-amino-acid polypeptide reads, in one-letter code: Small ribosomal subunit protein uS17 (83 aa).

The protein belongs to the universal ribosomal protein uS17 family. As to quaternary structure, part of the 30S ribosomal subunit.

In terms of biological role, one of the primary rRNA binding proteins, it binds specifically to the 5'-end of 16S ribosomal RNA. This chain is Small ribosomal subunit protein uS17, found in Chlamydia abortus (strain DSM 27085 / S26/3) (Chlamydophila abortus).